Reading from the N-terminus, the 437-residue chain is Glutamate-1-semialdehyde 2,1-aminomutase (437 aa).

N6-(pyridoxal phosphate)lysine is present on K279.

The protein belongs to the class-III pyridoxal-phosphate-dependent aminotransferase family. HemL subfamily. In terms of assembly, homodimer. Pyridoxal 5'-phosphate is required as a cofactor.

It localises to the cytoplasm. The enzyme catalyses (S)-4-amino-5-oxopentanoate = 5-aminolevulinate. The protein operates within porphyrin-containing compound metabolism; protoporphyrin-IX biosynthesis; 5-aminolevulinate from L-glutamyl-tRNA(Glu): step 2/2. The protein is Glutamate-1-semialdehyde 2,1-aminomutase of Sorangium cellulosum (strain So ce56) (Polyangium cellulosum (strain So ce56)).